The following is a 497-amino-acid chain: Probable cytosol aminopeptidase (497 aa).

Mn(2+)-binding residues include K262 and D267. Residue K274 is part of the active site. 3 residues coordinate Mn(2+): D285, D344, and E346. R348 is an active-site residue.

It belongs to the peptidase M17 family. Mn(2+) serves as cofactor.

Its subcellular location is the cytoplasm. It carries out the reaction Release of an N-terminal amino acid, Xaa-|-Yaa-, in which Xaa is preferably Leu, but may be other amino acids including Pro although not Arg or Lys, and Yaa may be Pro. Amino acid amides and methyl esters are also readily hydrolyzed, but rates on arylamides are exceedingly low.. The catalysed reaction is Release of an N-terminal amino acid, preferentially leucine, but not glutamic or aspartic acids.. Presumably involved in the processing and regular turnover of intracellular proteins. Catalyzes the removal of unsubstituted N-terminal amino acids from various peptides. This Rhizobium etli (strain ATCC 51251 / DSM 11541 / JCM 21823 / NBRC 15573 / CFN 42) protein is Probable cytosol aminopeptidase.